The sequence spans 488 residues: Envelope glycoprotein gp62 (488 aa).

Residues M1–G20 form the signal peptide. At D21–A442 the chain is on the extracellular side. N-linked (GlcNAc...) asparagine; by host glycosylation is found at N140 and N222. Positions C225 to C228 match the CXXC motif. Residues N244 and N272 are each glycosylated (N-linked (GlcNAc...) asparagine; by host). The interval A313–G333 is fusion peptide. Coiled-coil stretches lie at residues A341–W387 and Q397–L429. Positions A376 to L392 are immunosuppression. The cysteines at positions 393 and 400 are disulfide-linked. An N-linked (GlcNAc...) asparagine; by host glycan is attached at N404. A helical transmembrane segment spans residues L443–I463. C462 is lipidated: S-palmitoyl cysteine; by host. Residues L464–L488 lie on the Cytoplasmic side of the membrane.

In terms of assembly, the mature envelope protein (Env) consists of a trimer of SU-TM heterodimers attached by non-covalent interactions or by a labile interchain disulfide bond. In terms of processing, specific enzymatic cleavages in vivo yield mature proteins. Envelope glycoproteins are synthesized as an inactive precursor that is N-glycosylated and processed likely by host cell furin or by a furin-like protease in the Golgi to yield the mature SU and TM proteins. The cleavage site between SU and TM requires the minimal sequence [KR]-X-[KR]-R. The transmembrane protein is palmitoylated.

The protein localises to the virion membrane. It localises to the host cell membrane. In terms of biological role, the surface protein (SU) attaches the virus to the host cell by binding to its receptor. This interaction triggers the refolding of the transmembrane protein (TM) and is thought to activate its fusogenic potential by unmasking its fusion peptide. Fusion occurs at the host cell plasma membrane. Its function is as follows. The transmembrane protein (TM) acts as a class I viral fusion protein. Under the current model, the protein has at least 3 conformational states: pre-fusion native state, pre-hairpin intermediate state, and post-fusion hairpin state. During viral and target cell membrane fusion, the coiled coil regions (heptad repeats) assume a trimer-of-hairpins structure, positioning the fusion peptide in close proximity to the C-terminal region of the ectodomain. The formation of this structure appears to drive apposition and subsequent fusion of viral and target cell membranes. Membranes fusion leads to delivery of the nucleocapsid into the cytoplasm. The sequence is that of Envelope glycoprotein gp62 (env) from Homo sapiens (Human).